The sequence spans 486 residues: Ribulose bisphosphate carboxylase large chain 1 (486 aa).

Substrate is bound by residues Asn125 and Thr175. Residue Lys177 is the Proton acceptor of the active site. Position 179 (Lys179) interacts with substrate. Mg(2+)-binding residues include Lys203, Asp205, and Glu206. Lys203 carries the post-translational modification N6-carboxylysine. His295 functions as the Proton acceptor in the catalytic mechanism. Substrate-binding residues include Arg296, His328, and Ser380.

The protein belongs to the RuBisCO large chain family. Type I subfamily. As to quaternary structure, heterohexadecamer of 8 large chains and 8 small chains. The cofactor is Mg(2+).

It catalyses the reaction 2 (2R)-3-phosphoglycerate + 2 H(+) = D-ribulose 1,5-bisphosphate + CO2 + H2O. The catalysed reaction is D-ribulose 1,5-bisphosphate + O2 = 2-phosphoglycolate + (2R)-3-phosphoglycerate + 2 H(+). In terms of biological role, ruBisCO catalyzes two reactions: the carboxylation of D-ribulose 1,5-bisphosphate, the primary event in carbon dioxide fixation, as well as the oxidative fragmentation of the pentose substrate. Both reactions occur simultaneously and in competition at the same active site. The protein is Ribulose bisphosphate carboxylase large chain 1 of Bradyrhizobium sp. (strain ORS 278).